The primary structure comprises 609 residues: UvrABC system protein C (609 aa).

A GIY-YIG domain is found at 16–94; that stretch reads SSAGVYRMYD…IKQYMPRYNV (79 aa). Residues 203–238 enclose the UVR domain; that stretch reads QQVIATLVGKMEQAAMDLNYEDAARYRDQISALRRV.

The protein belongs to the UvrC family. As to quaternary structure, interacts with UvrB in an incision complex.

It is found in the cytoplasm. Functionally, the UvrABC repair system catalyzes the recognition and processing of DNA lesions. UvrC both incises the 5' and 3' sides of the lesion. The N-terminal half is responsible for the 3' incision and the C-terminal half is responsible for the 5' incision. The sequence is that of UvrABC system protein C from Shewanella loihica (strain ATCC BAA-1088 / PV-4).